We begin with the raw amino-acid sequence, 432 residues long: MDEMILLRRVLLAGFICALLVPSGLSCGPGRGIGTRKRFKKLTPLAYKQFTPNVPEKTLGASGRYEGKITRNSERFKELTPNYNPDIIFKDEENTGADRLMTQRCKDKLNALAISVMNQWPGVKLRVTEGWDEDGHHFEESLHYEGRAVDITTSDRDRSKYGMLARLAAEAGFDWVYFESKAHIHCSVKAENSVAAKSGGCFPGSATVALEQGVRIPVKDLRPGDRVLAADGLGKLVYSDFLLFMDKEETVRKVFYVIETSRERVRLTAAHLLFVGQAHPGNDSGGDFRSVFGSAGFRSMFASSVRAGHRVLTVDREGRGLREATVERVYLEEATGAYAPVTAHGTVVIDRVLASCYAVIEEHSWAHWAFAPLRVGLGILSFFSPQDYSSHSPPAPSQSEGVHWYSEILYRIGTWVLQEDTIHPLGMAAKSS.

A signal peptide spans 1–26; sequence MDEMILLRRVLLAGFICALLVPSGLS. Residue Cys27 is the site of N-palmitoyl cysteine attachment. Positions 35–41 match the Cardin-Weintraub motif; sequence TRKRFKK. Residues Glu92, Glu93, Asp98, Thr128, Glu129, Asp132, and Asp134 each coordinate Ca(2+). His143, Asp150, and His185 together coordinate Zn(2+). Gly200 is lipidated: Cholesterol glycine ester.

This sequence belongs to the hedgehog family. In terms of assembly, interacts with HHATL/GUP1 which negatively regulates HHAT-mediated palmitoylation of the SHH N-terminus. Interacts with BOC and CDON. Interacts with HHIP. Interacts with DISP1 via its cholesterol anchor. Interacts with SCUBE2. Multimer. In terms of processing, the C-terminal domain displays an autoproteolysis activity and a cholesterol transferase activity. Both activities result in the cleavage of the full-length protein and covalent attachment of a cholesterol moiety to the C-terminal of the newly generated N-terminal fragment (ShhN). Cholesterylation is required for the sonic hedgehog protein N-product targeting to lipid rafts and multimerization. ShhN is the active species in both local and long-range signaling, whereas the C-product (ShhC) is degraded in the reticulum endoplasmic. Post-translationally, N-palmitoylation by HHAT of ShhN is required for sonic hedgehog protein N-product multimerization and full activity. It is a prerequisite for the membrane-proximal positioning and the subsequent shedding of this N-terminal peptide. The lipidated N- and C-terminal peptides of ShhNp can be cleaved (shedding). The N-terminal palmitoylated peptide is cleaved at the Cardin-Weintraub (CW) motif site. The cleavage reduced the interactions with heparan sulfate. The cleavage is enhanced by SCUBE2.

The protein localises to the endoplasmic reticulum membrane. It localises to the golgi apparatus membrane. The protein resides in the cell membrane. The catalysed reaction is glycyl-L-cysteinyl-[protein] + cholesterol + H(+) = [protein]-C-terminal glycyl cholesterol ester + N-terminal L-cysteinyl-[protein]. In terms of biological role, the C-terminal part of the sonic hedgehog protein precursor displays an autoproteolysis and a cholesterol transferase activity. Both activities result in the cleavage of the full-length protein into two parts (ShhN and ShhC) followed by the covalent attachment of a cholesterol moiety to the C-terminal of the newly generated ShhN. Both activities occur in the endoplasmic reticulum. Once cleaved, ShhC is degraded in the endoplasmic reticulum. Functionally, the dually lipidated sonic hedgehog protein N-product (ShhNp) is a morphogen which is essential for a variety of patterning events during development. Induces ventral cell fate in the neural tube and somites. Involved in the patterning of the anterior-posterior axis of the developing limb bud. Essential for axon guidance. Binds to the patched (PTCH1) receptor, which functions in association with smoothened (SMO), to activate the transcription of target genes. In the absence of SHH, PTCH1 represses the constitutive signaling activity of SMO. The protein is Sonic hedgehog protein of Cynops pyrrhogaster (Japanese fire-bellied newt).